The chain runs to 152 residues: Small ribosomal subunit protein bS6 (152 aa).

Residues 96–152 (HEEGPSAMLQKRDRDDRGPREGGDRGPRREFGDRPPRRDGDFQRGPRPDRAPREDRA) are disordered.

Belongs to the bacterial ribosomal protein bS6 family.

In terms of biological role, binds together with bS18 to 16S ribosomal RNA. The sequence is that of Small ribosomal subunit protein bS6 from Rhizobium etli (strain CIAT 652).